A 91-amino-acid chain; its full sequence is YcgL domain-containing protein ETA_15380 (91 aa).

Positions 1–85 (MFCVIYRSPQ…PLESLLKIHL (85 aa)) constitute a YcgL domain.

This Erwinia tasmaniensis (strain DSM 17950 / CFBP 7177 / CIP 109463 / NCPPB 4357 / Et1/99) protein is YcgL domain-containing protein ETA_15380.